The chain runs to 61 residues: U-stichotoxin-Hcr1a (61 aa).

The first 21 residues, 1 to 21 (MKPAIFLMLFVAMFLISEGEG), serve as a signal peptide directing secretion. Positions 22–31 (FKPKDAPQER) are excised as a propeptide. Position 36 is a hydroxyproline (P36). 2 cysteine pairs are disulfide-bonded: C41–C53 and C44–C59.

The protein belongs to the Hau1a/HC18/HC19 family.

The protein localises to the secreted. The protein resides in the nematocyst. Its function is as follows. Toxin that is lethal to crab. Does not produce the typical symptoms associated with sodium channel toxins in crabs, suggesting that it likely does not act on sodium channels. The protein is U-stichotoxin-Hcr1a of Radianthus crispa (Leathery sea anemone).